We begin with the raw amino-acid sequence, 150 residues long: D-aminoacyl-tRNA deacylase (150 aa).

The Gly-cisPro motif, important for rejection of L-amino acids motif lies at 138–139 (GP).

This sequence belongs to the DTD family. Homodimer.

It is found in the cytoplasm. It catalyses the reaction glycyl-tRNA(Ala) + H2O = tRNA(Ala) + glycine + H(+). It carries out the reaction a D-aminoacyl-tRNA + H2O = a tRNA + a D-alpha-amino acid + H(+). Functionally, an aminoacyl-tRNA editing enzyme that deacylates mischarged D-aminoacyl-tRNAs. Also deacylates mischarged glycyl-tRNA(Ala), protecting cells against glycine mischarging by AlaRS. Acts via tRNA-based rather than protein-based catalysis; rejects L-amino acids rather than detecting D-amino acids in the active site. By recycling D-aminoacyl-tRNA to D-amino acids and free tRNA molecules, this enzyme counteracts the toxicity associated with the formation of D-aminoacyl-tRNA entities in vivo and helps enforce protein L-homochirality. The polypeptide is D-aminoacyl-tRNA deacylase (Flavobacterium psychrophilum (strain ATCC 49511 / DSM 21280 / CIP 103535 / JIP02/86)).